Reading from the N-terminus, the 536-residue chain is Heat shock factor protein 2 (536 aa).

Glycyl lysine isopeptide (Lys-Gly) (interchain with G-Cter in SUMO2) cross-links involve residues K2 and K82. The DNA-binding element occupies 7–112 (VPAFLSKLWT…LLENIKRKVS (106 aa)). The Nuclear localization signal signature appears at 108-122 (KRKVSSSKPEENKIR). Positions 119–192 (NKIRQEDLTK…VTLVQNNQLV (74 aa)) are hydrophobic repeat HR-A/B. Glycyl lysine isopeptide (Lys-Gly) (interchain with G-Cter in SUMO2) cross-links involve residues K135, K139, K151, K210, K218, and K237. A Nuclear localization signal motif is present at residues 195–210 (KRKRPLLLNTNGAQKK). A disordered region spans residues 300 to 337 (QSGEQNEPARESLSSGSDGSSPLMSSAVQLNGSSSLTS). Residues 311-325 (SLSSGSDGSSPLMSS) show a composition bias toward low complexity. Residues 326-337 (AVQLNGSSSLTS) are compositionally biased toward polar residues. The segment at 360 to 385 (LLDYLDSIDCSLEDFQAMLSGRQFSI) is hydrophobic repeat HR-C. The disordered stretch occupies residues 407-438 (NNTKSENKGLETTKNNVVQPVSEEGRKSKSKP). The span at 429 to 438 (EEGRKSKSKP) shows a compositional bias: basic and acidic residues.

Belongs to the HSF family. As to quaternary structure, DNA-binding homotrimer in stressed or heat shocked cells, otherwise found as a homodimer.

The protein resides in the cytoplasm. It is found in the nucleus. In terms of biological role, DNA-binding protein that specifically binds heat shock promoter elements (HSE) and activates transcription. In higher eukaryotes, HSF is unable to bind to the HSE unless the cells are heat shocked. This Homo sapiens (Human) protein is Heat shock factor protein 2 (HSF2).